We begin with the raw amino-acid sequence, 384 residues long: Cytochrome b (384 aa).

Helical transmembrane passes span 32–52 (FGSL…FLAM), 76–98 (WLLR…LHMA), 113–133 (LWNM…MGYC), and 179–199 (FFSL…LHLL). Residues His82 and His96 each contribute to the heme b site. His183 and His197 together coordinate heme b. His202 provides a ligand contact to a ubiquinone. A run of 4 helical transmembrane segments spans residues 225–245 (FLFK…FLIS), 289–309 (MMGV…PFVD), 321–341 (LSKI…LIGA), and 348–368 (YIII…ILLP).

It belongs to the cytochrome b family. As to quaternary structure, fungal cytochrome b-c1 complex contains 10 subunits; 3 respiratory subunits, 2 core proteins and 5 low-molecular weight proteins. Cytochrome b-c1 complex is a homodimer. Heme b serves as cofactor.

The protein resides in the mitochondrion inner membrane. Functionally, component of the ubiquinol-cytochrome c reductase complex (complex III or cytochrome b-c1 complex) that is part of the mitochondrial respiratory chain. The b-c1 complex mediates electron transfer from ubiquinol to cytochrome c. Contributes to the generation of a proton gradient across the mitochondrial membrane that is then used for ATP synthesis. This chain is Cytochrome b (COB), found in Starmerella bacillaris (Yeast).